Reading from the N-terminus, the 659-residue chain is Hemocyanin subunit B (659 aa).

The signal sequence occupies residues 1 to 18 (MVAKWCVLAMCLLVAVGA). Cu cation-binding residues include His198, His202, and His232. N-linked (GlcNAc...) asparagine glycosylation occurs at Asn318. Cu cation is bound by residues His353, His357, and His393. A disulfide bond links Cys562 and Cys609.

It belongs to the tyrosinase family. Hemocyanin subfamily. As to quaternary structure, 36-chain polymer consisting of 6 hexamers, each of which includes 4 different chains, A, B, C and D. In terms of tissue distribution, hemolymph.

It localises to the secreted. It is found in the extracellular space. Functionally, hemocyanins are copper-containing oxygen carriers occurring freely dissolved in the hemolymph of many mollusks and arthropods. In Scutigera coleoptrata (House centipede), this protein is Hemocyanin subunit B (HCB).